Consider the following 228-residue polypeptide: Eukaryotic translation initiation factor 4E-1 (228 aa).

Basic and acidic residues predominate over residues 1–19; sequence MATAEMEKTTTFDEAEKVK. The disordered stretch occupies residues 1–33; sequence MATAEMEKTTTFDEAEKVKLNANEADDEVEEGE. The segment covering 24–33 has biased composition (acidic residues); it reads EADDEVEEGE. EIF4G-binding regions lie at residues 53–56 and 63–99; these read HPLE and FDNP…NNIH. Residues 71 to 76, lysine 103, and 121 to 122 each bind mRNA; these read KQAAWG and WE. Residues cysteine 126 and cysteine 164 are joined by a disulfide bond. An EIF4G-binding region spans residues 147-156; the sequence is YTLLAMIGHQ. MRNA contacts are provided by residues 171–176 and 216–220; these read RGKGEK and KRLDR.

Belongs to the eukaryotic initiation factor 4E family. As to quaternary structure, EIF4F is a multi-subunit complex, the composition of which varies with external and internal environmental conditions. It is composed of at least EIF4A, EIF4E and EIF4G. EIF4E is also known to interact with other partners. In higher plants two isoforms of EIF4F have been identified, named isoform EIF4F and isoform EIF(iso)4F. Isoform EIF4F has subunits p220 and p26, whereas isoform EIF(iso)4F has subunits p82 and p28. In terms of assembly, (Microbial infection) Interacts with potyvirus viral genome-linked protein (VPg); this interaction is possible in susceptible hosts but is impaired in resistant plants. Thus the VPg of tobacco etch virus (TEV) strain HAT interacts with susceptible alleles pvr2(+), pvr2(3) and pvr2(9) but not with the resistant allele pvr2(2), the VPg of TEV strain CAA10 interacts with susceptible alleles pvr2(+), pvr2(2), pvr2(3) and pvr2(9), the VPg of potato virus Y (PVY) strain LYE84 interacts with tomato eIF4E1 and eIF4E2 as well as with the Capsicum annuum eIF4E1 susceptible allele pvr2(+) but not with resistant alleles pvr2(1), pvr2(2), pvr2(3), pvr2(4), pvr2(5), pvr2(6), pvr2(7), pvr2(8) and pvr2(9) and the VPg of PVY strain SON41 interacts with C.annuum eIF4E1 susceptible alleles pvr2(+), pvr2(1), pvr2(2), pvr2(3) and pvr2(4) but not with resistant alleles pvr2(5), pvr2(6), pvr2(7), pvr2(8) and pvr2(9). In addition, the susceptible allele pvr1(+) interacts strongly with TEV strains HAT and NW VPg while resistance alleles (pvr1, pvr1(1), and pvr1(2)) fail to bind TEV VPg. Post-translationally, according to the redox status, the Cys-126-Cys-164 disulfide bridge may have a role in regulating protein function by affecting its ability to bind capped mRNA.

The protein resides in the nucleus. It localises to the cytoplasm. Its function is as follows. Component of the protein complex eIF4F, which is involved in the recognition of the mRNA cap, ATP-dependent unwinding of 5'-terminal secondary structure and recruitment of mRNA to the ribosome. Recognizes and binds the 7-methylguanosine-containing mRNA cap during an early step in the initiation of protein synthesis and facilitates ribosome binding by inducing the unwinding of the mRNAs secondary structures. Key component of recessive resistance to potyviruses. (Microbial infection) Susceptibility host factor required for viral infection (e.g. potato virus Y (PVY) and tobacco etch virus (TEV)) by recruiting viral RNAs to the host ribosomal complex via an interaction with viral genome-linked protein (VPg). This chain is Eukaryotic translation initiation factor 4E-1, found in Capsicum annuum (Capsicum pepper).